A 40-amino-acid polypeptide reads, in one-letter code: Photosystem II reaction center protein J (40 aa).

A helical transmembrane segment spans residues 8-28 (IPLWLIGTVTGIIVIGLLGIF).

It belongs to the PsbJ family. In terms of assembly, PSII is composed of 1 copy each of membrane proteins PsbA, PsbB, PsbC, PsbD, PsbE, PsbF, PsbH, PsbI, PsbJ, PsbK, PsbL, PsbM, PsbT, PsbX, PsbY, PsbZ, Psb30/Ycf12, at least 3 peripheral proteins of the oxygen-evolving complex and a large number of cofactors. It forms dimeric complexes.

The protein localises to the plastid. Its subcellular location is the chloroplast thylakoid membrane. In terms of biological role, one of the components of the core complex of photosystem II (PSII). PSII is a light-driven water:plastoquinone oxidoreductase that uses light energy to abstract electrons from H(2)O, generating O(2) and a proton gradient subsequently used for ATP formation. It consists of a core antenna complex that captures photons, and an electron transfer chain that converts photonic excitation into a charge separation. The sequence is that of Photosystem II reaction center protein J from Pinus koraiensis (Korean pine).